The primary structure comprises 91 residues: Small ribosomal subunit protein uS15 (91 aa).

Belongs to the universal ribosomal protein uS15 family. Part of the 30S ribosomal subunit. Forms a bridge to the 50S subunit in the 70S ribosome, contacting the 23S rRNA.

In terms of biological role, one of the primary rRNA binding proteins, it binds directly to 16S rRNA where it helps nucleate assembly of the platform of the 30S subunit by binding and bridging several RNA helices of the 16S rRNA. Its function is as follows. Forms an intersubunit bridge (bridge B4) with the 23S rRNA of the 50S subunit in the ribosome. The chain is Small ribosomal subunit protein uS15 from Cytophaga hutchinsonii (strain ATCC 33406 / DSM 1761 / CIP 103989 / NBRC 15051 / NCIMB 9469 / D465).